Reading from the N-terminus, the 523-residue chain is 2-isopropylmalate synthase (523 aa).

One can recognise a Pyruvate carboxyltransferase domain in the interval 5–267; sequence VIIFDTTLRD…HTRINHQEIW (263 aa). Mn(2+) contacts are provided by aspartate 14, histidine 202, histidine 204, and asparagine 238. The segment at 392–523 is regulatory domain; it reads RLEYFSVQSG…QNKEHNQETV (132 aa).

Belongs to the alpha-IPM synthase/homocitrate synthase family. LeuA type 1 subfamily. Homodimer. Requires Mn(2+) as cofactor.

Its subcellular location is the cytoplasm. It carries out the reaction 3-methyl-2-oxobutanoate + acetyl-CoA + H2O = (2S)-2-isopropylmalate + CoA + H(+). The protein operates within amino-acid biosynthesis; L-leucine biosynthesis; L-leucine from 3-methyl-2-oxobutanoate: step 1/4. Its function is as follows. Catalyzes the condensation of the acetyl group of acetyl-CoA with 3-methyl-2-oxobutanoate (2-ketoisovalerate) to form 3-carboxy-3-hydroxy-4-methylpentanoate (2-isopropylmalate). This is 2-isopropylmalate synthase from Cronobacter sakazakii (strain ATCC BAA-894) (Enterobacter sakazakii).